The sequence spans 493 residues: Argininosuccinate lyase (493 aa).

It belongs to the lyase 1 family. Argininosuccinate lyase subfamily.

It is found in the cytoplasm. The catalysed reaction is 2-(N(omega)-L-arginino)succinate = fumarate + L-arginine. It participates in amino-acid biosynthesis; L-arginine biosynthesis; L-arginine from L-ornithine and carbamoyl phosphate: step 3/3. This Clavibacter sepedonicus (Clavibacter michiganensis subsp. sepedonicus) protein is Argininosuccinate lyase.